The chain runs to 194 residues: Peptidyl-tRNA hydrolase (194 aa).

Tyr-17 contributes to the tRNA binding site. His-22 serves as the catalytic Proton acceptor. Positions 68, 70, and 116 each coordinate tRNA.

It belongs to the PTH family. As to quaternary structure, monomer.

It localises to the cytoplasm. It carries out the reaction an N-acyl-L-alpha-aminoacyl-tRNA + H2O = an N-acyl-L-amino acid + a tRNA + H(+). In terms of biological role, hydrolyzes ribosome-free peptidyl-tRNAs (with 1 or more amino acids incorporated), which drop off the ribosome during protein synthesis, or as a result of ribosome stalling. Its function is as follows. Catalyzes the release of premature peptidyl moieties from peptidyl-tRNA molecules trapped in stalled 50S ribosomal subunits, and thus maintains levels of free tRNAs and 50S ribosomes. The chain is Peptidyl-tRNA hydrolase from Haemophilus influenzae (strain 86-028NP).